A 149-amino-acid polypeptide reads, in one-letter code: D-aminoacyl-tRNA deacylase (149 aa).

A Gly-cisPro motif, important for rejection of L-amino acids motif is present at residues G139 to P140.

It belongs to the DTD family. Homodimer.

The protein localises to the cytoplasm. The enzyme catalyses glycyl-tRNA(Ala) + H2O = tRNA(Ala) + glycine + H(+). The catalysed reaction is a D-aminoacyl-tRNA + H2O = a tRNA + a D-alpha-amino acid + H(+). Its function is as follows. An aminoacyl-tRNA editing enzyme that deacylates mischarged D-aminoacyl-tRNAs. Also deacylates mischarged glycyl-tRNA(Ala), protecting cells against glycine mischarging by AlaRS. Acts via tRNA-based rather than protein-based catalysis; rejects L-amino acids rather than detecting D-amino acids in the active site. By recycling D-aminoacyl-tRNA to D-amino acids and free tRNA molecules, this enzyme counteracts the toxicity associated with the formation of D-aminoacyl-tRNA entities in vivo and helps enforce protein L-homochirality. This chain is D-aminoacyl-tRNA deacylase (DTD1), found in Candida glabrata (strain ATCC 2001 / BCRC 20586 / JCM 3761 / NBRC 0622 / NRRL Y-65 / CBS 138) (Yeast).